The primary structure comprises 224 residues: Lipoprotein-releasing system ATP-binding protein LolD (224 aa).

The ABC transporter domain maps to 6 to 224; that stretch reads LEFCNVSKFF…IVNHSLISSI (219 aa). 43-50 contacts ATP; that stretch reads GASGVGKT.

This sequence belongs to the ABC transporter superfamily. Lipoprotein translocase (TC 3.A.1.125) family. As to quaternary structure, the complex is composed of two ATP-binding proteins (LolD) and two transmembrane proteins (LolC and LolE).

It is found in the cell inner membrane. Its function is as follows. Part of the ABC transporter complex LolCDE involved in the translocation of mature outer membrane-directed lipoproteins, from the inner membrane to the periplasmic chaperone, LolA. Responsible for the formation of the LolA-lipoprotein complex in an ATP-dependent manner. This is Lipoprotein-releasing system ATP-binding protein LolD from Neorickettsia sennetsu (strain ATCC VR-367 / Miyayama) (Ehrlichia sennetsu).